A 477-amino-acid polypeptide reads, in one-letter code: Methylenetetrahydrofolate--tRNA-(uracil-5-)-methyltransferase TrmFO (477 aa).

Residue 14–19 (GGGLAG) participates in FAD binding.

This sequence belongs to the MnmG family. TrmFO subfamily. The cofactor is FAD.

Its subcellular location is the cytoplasm. It catalyses the reaction uridine(54) in tRNA + (6R)-5,10-methylene-5,6,7,8-tetrahydrofolate + NADH + H(+) = 5-methyluridine(54) in tRNA + (6S)-5,6,7,8-tetrahydrofolate + NAD(+). The catalysed reaction is uridine(54) in tRNA + (6R)-5,10-methylene-5,6,7,8-tetrahydrofolate + NADPH + H(+) = 5-methyluridine(54) in tRNA + (6S)-5,6,7,8-tetrahydrofolate + NADP(+). In terms of biological role, catalyzes the folate-dependent formation of 5-methyl-uridine at position 54 (M-5-U54) in all tRNAs. In Rhizobium etli (strain ATCC 51251 / DSM 11541 / JCM 21823 / NBRC 15573 / CFN 42), this protein is Methylenetetrahydrofolate--tRNA-(uracil-5-)-methyltransferase TrmFO.